Here is a 417-residue protein sequence, read N- to C-terminus: Histidine--tRNA ligase (417 aa).

Belongs to the class-II aminoacyl-tRNA synthetase family. As to quaternary structure, homodimer.

It is found in the cytoplasm. The catalysed reaction is tRNA(His) + L-histidine + ATP = L-histidyl-tRNA(His) + AMP + diphosphate + H(+). This chain is Histidine--tRNA ligase, found in Oleidesulfovibrio alaskensis (strain ATCC BAA-1058 / DSM 17464 / G20) (Desulfovibrio alaskensis).